The chain runs to 298 residues: NAD kinase (298 aa).

Aspartate 80 functions as the Proton acceptor in the catalytic mechanism. NAD(+) contacts are provided by residues 80-81 (DG), 154-155 (ND), arginine 182, aspartate 184, 195-200 (TAYALS), alanine 219, and glutamine 253.

This sequence belongs to the NAD kinase family. Requires a divalent metal cation as cofactor.

Its subcellular location is the cytoplasm. It carries out the reaction NAD(+) + ATP = ADP + NADP(+) + H(+). Functionally, involved in the regulation of the intracellular balance of NAD and NADP, and is a key enzyme in the biosynthesis of NADP. Catalyzes specifically the phosphorylation on 2'-hydroxyl of the adenosine moiety of NAD to yield NADP. The sequence is that of NAD kinase from Paracidovorax citrulli (strain AAC00-1) (Acidovorax citrulli).